A 245-amino-acid chain; its full sequence is tRNA (guanine-N(1)-)-methyltransferase (245 aa).

S-adenosyl-L-methionine-binding positions include G111 and 130 to 135 (IGDYVL).

Belongs to the RNA methyltransferase TrmD family. As to quaternary structure, homodimer.

It is found in the cytoplasm. The enzyme catalyses guanosine(37) in tRNA + S-adenosyl-L-methionine = N(1)-methylguanosine(37) in tRNA + S-adenosyl-L-homocysteine + H(+). In terms of biological role, specifically methylates guanosine-37 in various tRNAs. The chain is tRNA (guanine-N(1)-)-methyltransferase from Dictyoglomus turgidum (strain DSM 6724 / Z-1310).